Consider the following 181-residue polypeptide: NADH-quinone oxidoreductase subunit B 2 (181 aa).

Residues C44, C45, C110, and C139 each coordinate [4Fe-4S] cluster.

The protein belongs to the complex I 20 kDa subunit family. NDH-1 is composed of 14 different subunits. Subunits NuoB, C, D, E, F, and G constitute the peripheral sector of the complex. [4Fe-4S] cluster is required as a cofactor.

It localises to the cell inner membrane. The enzyme catalyses a quinone + NADH + 5 H(+)(in) = a quinol + NAD(+) + 4 H(+)(out). NDH-1 shuttles electrons from NADH, via FMN and iron-sulfur (Fe-S) centers, to quinones in the respiratory chain. The immediate electron acceptor for the enzyme in this species is believed to be a menaquinone. Couples the redox reaction to proton translocation (for every two electrons transferred, four hydrogen ions are translocated across the cytoplasmic membrane), and thus conserves the redox energy in a proton gradient. This chain is NADH-quinone oxidoreductase subunit B 2, found in Cytophaga hutchinsonii (strain ATCC 33406 / DSM 1761 / CIP 103989 / NBRC 15051 / NCIMB 9469 / D465).